Consider the following 404-residue polypeptide: Cysteine desulfurase IscS (404 aa).

Residues 75–76 (AT), Asn155, Gln183, and 203–205 (SAH) contribute to the pyridoxal 5'-phosphate site. The residue at position 206 (Lys206) is an N6-(pyridoxal phosphate)lysine. Thr243 is a binding site for pyridoxal 5'-phosphate. Cys328 serves as the catalytic Cysteine persulfide intermediate. Cys328 lines the [2Fe-2S] cluster pocket.

It belongs to the class-V pyridoxal-phosphate-dependent aminotransferase family. NifS/IscS subfamily. As to quaternary structure, homodimer. Forms a heterotetramer with IscU, interacts with other sulfur acceptors. It depends on pyridoxal 5'-phosphate as a cofactor.

It is found in the cytoplasm. The enzyme catalyses (sulfur carrier)-H + L-cysteine = (sulfur carrier)-SH + L-alanine. Its pathway is cofactor biosynthesis; iron-sulfur cluster biosynthesis. Master enzyme that delivers sulfur to a number of partners involved in Fe-S cluster assembly, tRNA modification or cofactor biosynthesis. Catalyzes the removal of elemental sulfur atoms from cysteine to produce alanine. Functions as a sulfur delivery protein for Fe-S cluster synthesis onto IscU, an Fe-S scaffold assembly protein, as well as other S acceptor proteins. The polypeptide is Cysteine desulfurase IscS (Neisseria meningitidis serogroup A / serotype 4A (strain DSM 15465 / Z2491)).